The primary structure comprises 312 residues: HPr kinase/phosphorylase (312 aa).

Catalysis depends on residues His-139 and Lys-160. Residue Gly-154 to Ser-161 coordinates ATP. Residue Ser-161 coordinates Mg(2+). Catalysis depends on Asp-178, which acts as the Proton acceptor; for phosphorylation activity. Proton donor; for dephosphorylation activity. Residues Leu-202–Asn-211 are important for the catalytic mechanism of both phosphorylation and dephosphorylation. Glu-203 contacts Mg(2+). Arg-244 is an active-site residue. The segment at Pro-265–Arg-270 is important for the catalytic mechanism of dephosphorylation.

It belongs to the HPrK/P family. Homohexamer. The cofactor is Mg(2+).

The enzyme catalyses [HPr protein]-L-serine + ATP = [HPr protein]-O-phospho-L-serine + ADP + H(+). It catalyses the reaction [HPr protein]-O-phospho-L-serine + phosphate + H(+) = [HPr protein]-L-serine + diphosphate. In terms of biological role, catalyzes the ATP- as well as the pyrophosphate-dependent phosphorylation of a specific serine residue in HPr, a phosphocarrier protein of the phosphoenolpyruvate-dependent sugar phosphotransferase system (PTS). HprK/P also catalyzes the pyrophosphate-producing, inorganic phosphate-dependent dephosphorylation (phosphorolysis) of seryl-phosphorylated HPr (P-Ser-HPr). The two antagonistic activities of HprK/P are regulated by several intracellular metabolites, which change their concentration in response to the absence or presence of rapidly metabolisable carbon sources (glucose, fructose, etc.) in the growth medium. Therefore, by controlling the phosphorylation state of HPr, HPrK/P is a sensor enzyme that plays a major role in the regulation of carbon metabolism and sugar transport: it mediates carbon catabolite repression (CCR), and regulates PTS-catalyzed carbohydrate uptake and inducer exclusion. The sequence is that of HPr kinase/phosphorylase from Listeria innocua serovar 6a (strain ATCC BAA-680 / CLIP 11262).